The primary structure comprises 110 residues: UPF0060 membrane protein Bcep1808_1236 (110 aa).

3 helical membrane-spanning segments follow: residues 9–29, 34–54, and 66–86; these read ALFA…WLVL, PVWL…LLTL, and YGGV…GVAL.

The protein belongs to the UPF0060 family.

The protein localises to the cell inner membrane. This is UPF0060 membrane protein Bcep1808_1236 from Burkholderia vietnamiensis (strain G4 / LMG 22486) (Burkholderia cepacia (strain R1808)).